The following is a 160-amino-acid chain: Ribosome maturation factor RimP (160 aa).

Belongs to the RimP family.

The protein resides in the cytoplasm. Its function is as follows. Required for maturation of 30S ribosomal subunits. This chain is Ribosome maturation factor RimP, found in Orientia tsutsugamushi (strain Ikeda) (Rickettsia tsutsugamushi).